Consider the following 257-residue polypeptide: ATP synthase subunit a (257 aa).

Residues 1–4 (MFIT) constitute a propeptide, removed in mature form. 8 consecutive transmembrane segments (helical) span residues 27-47 (FSNF…LAII), 58-78 (IVPQ…LNLV), 93-113 (YFPF…LRLI), 122-142 (QLIF…ILGL), 149-169 (VFGL…LVLI), 189-209 (IIAG…FMGL), 214-234 (FIIG…EFGI), and 236-256 (FIQA…SLNL).

Belongs to the ATPase A chain family. F-type ATPases have 2 components, CF(1) - the catalytic core - and CF(0) - the membrane proton channel. CF(1) has five subunits: alpha(3), beta(3), gamma(1), delta(1), epsilon(1). CF(0) has three main subunits: a, b and c.

The protein localises to the mitochondrion inner membrane. Its function is as follows. Mitochondrial membrane ATP synthase (F(1)F(0) ATP synthase or Complex V) produces ATP from ADP in the presence of a proton gradient across the membrane which is generated by electron transport complexes of the respiratory chain. F-type ATPases consist of two structural domains, F(1) - containing the extramembraneous catalytic core and F(0) - containing the membrane proton channel, linked together by a central stalk and a peripheral stalk. During catalysis, ATP synthesis in the catalytic domain of F(1) is coupled via a rotary mechanism of the central stalk subunits to proton translocation. Key component of the proton channel; it may play a direct role in the translocation of protons across the membrane. In Schizosaccharomyces pombe (strain 972 / ATCC 24843) (Fission yeast), this protein is ATP synthase subunit a (atp6).